Reading from the N-terminus, the 496-residue chain is NADH-quinone oxidoreductase subunit N (496 aa).

13 helical membrane passes run 16-36, 46-66, 79-99, 116-136, 166-186, 208-228, 245-267, 278-298, 304-324, 331-351, 382-402, 422-442, and 464-484; these read SLSP…VGAI, CVFC…FNGL, ISII…PLAL, FLFM…LIIF, FAMG…FYLA, LIIL…LSLI, LAGY…IFAM, DMLY…ALVQ, MLAF…VANS, LFFY…MLWV, AVIM…SVFW, IIMI…VFMF, and VIVG…GAIL.

It belongs to the complex I subunit 2 family. In terms of assembly, NDH-1 is composed of 14 different subunits. Subunits NuoA, H, J, K, L, M, N constitute the membrane sector of the complex.

The protein localises to the cell inner membrane. It carries out the reaction a quinone + NADH + 5 H(+)(in) = a quinol + NAD(+) + 4 H(+)(out). Its function is as follows. NDH-1 shuttles electrons from NADH, via FMN and iron-sulfur (Fe-S) centers, to quinones in the respiratory chain. The immediate electron acceptor for the enzyme in this species is believed to be ubiquinone. Couples the redox reaction to proton translocation (for every two electrons transferred, four hydrogen ions are translocated across the cytoplasmic membrane), and thus conserves the redox energy in a proton gradient. The polypeptide is NADH-quinone oxidoreductase subunit N (Campylobacter concisus (strain 13826)).